The sequence spans 176 residues: Superoxide oxidase CybB (176 aa).

Residues 1-7 (MENKYSR) lie on the Cytoplasmic side of the membrane. Residues 8–29 (LQISIHWLVFLLVIAAYCAMEF) traverse the membrane as a helical segment. A heme b-binding site is contributed by H13. Over 30-39 (RGFFPRSDRP) the chain is Periplasmic. The helical transmembrane segment at 40–64 (LINMIHVSCGISILVLMVVRLLLRL) threads the bilayer. H45 contributes to the heme b binding site. Topologically, residues 65–77 (KYPTPPIIPKPKP) are cytoplasmic. The helical transmembrane segment at 78-103 (MMTGLAHLGHLVIYLLFIALPVIGLV) threads the bilayer. At 104–135 (MMYNRGNPWFAFGLTMPYASEANFERVDSLKS) the chain is on the periplasmic side. Residues 136–158 (WHETLANLGYFVIGLHAAAALAH) traverse the membrane as a helical segment. Positions 137 and 151 each coordinate heme b. At 159-176 (HYFWKDNTLLRMMPRKRS) the chain is on the cytoplasmic side.

It belongs to the cytochrome b561 family. In terms of assembly, monomer. The cofactor is heme b.

The protein localises to the cell inner membrane. It carries out the reaction a ubiquinol + 2 O2 = 2 superoxide + a ubiquinone + 2 H(+). The catalysed reaction is a menaquinol + 2 O2 = 2 superoxide + a menaquinone + 2 H(+). Quinone binding to the enzyme accelerates the reaction with superoxide. In terms of biological role, B-type di-heme cytochrome. Catalyzes the oxidation of superoxide to molecular oxygen and transfers the extracted electrons to ubiquinone through the two hemes. Can also use menaquinone. The enzyme may be responsible for the detoxification of the superoxide anion produced in the membrane or at its surface. However, it can also efficiently catalyze the formation of superoxide from ubiquinol under physiological conditions. This is Superoxide oxidase CybB from Escherichia coli (strain K12).